Consider the following 566-residue polypeptide: DNA ligase B (566 aa).

The active-site N6-AMP-lysine intermediate is the K125.

This sequence belongs to the NAD-dependent DNA ligase family. LigB subfamily.

It carries out the reaction NAD(+) + (deoxyribonucleotide)n-3'-hydroxyl + 5'-phospho-(deoxyribonucleotide)m = (deoxyribonucleotide)n+m + AMP + beta-nicotinamide D-nucleotide.. Catalyzes the formation of phosphodiester linkages between 5'-phosphoryl and 3'-hydroxyl groups in double-stranded DNA using NAD as a coenzyme and as the energy source for the reaction. This Pseudomonas putida (strain GB-1) protein is DNA ligase B.